A 688-amino-acid polypeptide reads, in one-letter code: MNFENLLIELGTEELPPKALRKLAESFLANFTEELTKADLAFKSAVWYAAPRRLALNITELAIAQADKIVEKRGPAVSSAFDAGGKPTKAAEGWARGNGITVDQAERLVTDKGEWLVYNAKVEGVETKSLVAAMAQRALDKLPIPKPMRWGSSKTQFIRPVHTATMLLGSELIEGELLGIKSARNIRGHRFMGTGFELDHADNYLTLLKEKGKVIADYESRKALIKADAEKAAAKIGGTADIEDALLEEVTSLVEWPVVLTASFEEKFLSVPSEALVYTMKGDQKYFPVFDDAGKLLPNFIFVANIESKDPAQIISGNEKVVRPRLADAEFFFNTDKKHTLESRLPSLETVLFQQQLGTLKDKVTRISALAAFIAEQTGANAVDAARAGLLSKTDLMTNMVMEFTDTQGTMGMHYARLDGETEAVALAMEEQYKPKFSGDTVPTAAVSCAVALADKLDTLVGIFGIGQAPKGAADPFALRRAAIGVLRIIVENKLPLDLVTLIAKAQELHGANLSNANASEEVLEFLMARFRAWYQDKGINVDVILAVLARRPTRPADFDSRINAVSHFRGLEASSALAAANKRVSNILAKVEGELPSSVNVALLSEAAEQALAAKLAELQPQLAPLFANADYQQALTLLASLRESVDQFFEDVMVMADDAALRNNRLALLNNLREQFLHVADISLLQ.

This sequence belongs to the class-II aminoacyl-tRNA synthetase family. Tetramer of two alpha and two beta subunits.

It is found in the cytoplasm. It carries out the reaction tRNA(Gly) + glycine + ATP = glycyl-tRNA(Gly) + AMP + diphosphate. This Shewanella oneidensis (strain ATCC 700550 / JCM 31522 / CIP 106686 / LMG 19005 / NCIMB 14063 / MR-1) protein is Glycine--tRNA ligase beta subunit.